Reading from the N-terminus, the 1180-residue chain is Tudor domain-containing protein 1 (1180 aa).

Disordered regions lie at residues 1–66 and 79–138; these read MSVK…KKNN and SQED…RPAK. The segment covering 27 to 41 has biased composition (basic and acidic residues); that stretch reads NFEKNENKLPPHESL. Composition is skewed to polar residues over residues 79–91 and 110–122; these read SQED…NPNG and NSVS…SNSP. Zn(2+)-binding residues include Cys170, Cys173, Cys181, Cys184, Cys190, Cys194, His202, and Cys206. The MYND-type zinc-finger motif lies at 170 to 206; that stretch reads CHRCGLFGSLRCSQCKQTYYCSTACQRRDWSAHSIVC. A Tudor 1 domain is found at 312-372; the sequence is IPVKGEVCIA…YHLNRNIDLF (61 aa). Positions 450-469 are disordered; that stretch reads SGQDSKKENADQSDPEDVGK. Tudor domains follow at residues 541–600, 762–821, and 990–1048; these read YPAI…LLEL, KAEI…FLNL, and RPRI…HLAL.

This sequence belongs to the TDRD1 family. As to quaternary structure, found in a mRNP complex, at least composed of TDRD1, TDRD6, TDRD7 and DDX4. Interacts with MAEL. Interacts with PIWIL1, PIWIL2 and PIWIL4 (when methylated on arginine residues). Interacts with TDRD12. Testis and ovary specific. Also expressed in several cancers.

Its subcellular location is the cytoplasm. Plays a central role during spermatogenesis by participating in the repression transposable elements and preventing their mobilization, which is essential for the germline integrity. Acts via the piRNA metabolic process, which mediates the repression of transposable elements during meiosis by forming complexes composed of piRNAs and Piwi proteins and governs the methylation and subsequent repression of transposons. Required for the localization of Piwi proteins to the meiotic nuage. Involved in the piRNA metabolic process by ensuring the entry of correct transcripts into the normal piRNA pool and limiting the entry of cellular transcripts into the piRNA pathway. May act by allowing the recruitment of piRNA biogenesis or loading factors that ensure the correct entry of transcripts and piRNAs into Piwi proteins. In Homo sapiens (Human), this protein is Tudor domain-containing protein 1 (TDRD1).